Reading from the N-terminus, the 148-residue chain is Small ribosomal subunit protein uS9 (148 aa).

Belongs to the universal ribosomal protein uS9 family.

This Drosophila melanogaster (Fruit fly) protein is Small ribosomal subunit protein uS9 (RpS16).